A 172-amino-acid chain; its full sequence is ATP synthase subunit b, chloroplastic (172 aa).

Residues 15–37 (ILATNLINLSAVLGVLIFFGKGV) traverse the membrane as a helical segment.

The protein belongs to the ATPase B chain family. In terms of assembly, F-type ATPases have 2 components, F(1) - the catalytic core - and F(0) - the membrane proton channel. F(1) has five subunits: alpha(3), beta(3), gamma(1), delta(1), epsilon(1). F(0) has four main subunits: a(1), b(1), b'(1) and c(10-14). The alpha and beta chains form an alternating ring which encloses part of the gamma chain. F(1) is attached to F(0) by a central stalk formed by the gamma and epsilon chains, while a peripheral stalk is formed by the delta, b and b' chains.

It localises to the plastid. The protein localises to the chloroplast thylakoid membrane. F(1)F(0) ATP synthase produces ATP from ADP in the presence of a proton or sodium gradient. F-type ATPases consist of two structural domains, F(1) containing the extramembraneous catalytic core and F(0) containing the membrane proton channel, linked together by a central stalk and a peripheral stalk. During catalysis, ATP synthesis in the catalytic domain of F(1) is coupled via a rotary mechanism of the central stalk subunits to proton translocation. Its function is as follows. Component of the F(0) channel, it forms part of the peripheral stalk, linking F(1) to F(0). In Pisum sativum (Garden pea), this protein is ATP synthase subunit b, chloroplastic.